The chain runs to 238 residues: MRIERVDDTTVKLFITYSDIEARGFKREDLWTNRKRGEEFFWNMMEEINEEEDFVVEGPLWIQVHAFEKGVEVTISKSKNEDLINMSDEDNEQLDYQVNDLLSQTFDQDDSLEDLFDQRQQQKDNKQNQDQNERNRQNTRTVIVKFNDLEEVIEYAHYNNQVTDEFEDLLYSLNNVYYYAVHYDETVDQETINDSYSQLLEFAYPTDKSEVYLNDYAKIIMSHNVASQVRRYFPNTEA.

Positions 120 to 136 (QQQKDNKQNQDQNERNR) are enriched in basic and acidic residues. A disordered region spans residues 120–139 (QQQKDNKQNQDQNERNRQNT).

Belongs to the MecA family. In terms of assembly, homodimer.

Functionally, enables the recognition and targeting of unfolded and aggregated proteins to the ClpC protease or to other proteins involved in proteolysis. The sequence is that of Adapter protein MecA from Staphylococcus saprophyticus subsp. saprophyticus (strain ATCC 15305 / DSM 20229 / NCIMB 8711 / NCTC 7292 / S-41).